Reading from the N-terminus, the 92-residue chain is C-C motif chemokine 3 (92 aa).

Residues 1 to 26 (MQVSTAALAVLLCTVALCNRISATFA) form the signal peptide. 2 cysteine pairs are disulfide-bonded: C33-C57 and C34-C73.

The protein belongs to the intercrine beta (chemokine CC) family. As to quaternary structure, self-associates. Also heterodimer of MIP-1-alpha(4-69) and MIP-1-beta(3-69). Interacts with CCR1.

It localises to the secreted. In terms of biological role, monokine with inflammatory and chemokinetic properties. Binds to CCR1, CCR4 and CCR5. One of the major HIV-suppressive factors produced by CD8+ T-cells. Recombinant MIP-1-alpha induces a dose-dependent inhibition of different strains of HIV-1, HIV-2, and simian immunodeficiency virus (SIV). This chain is C-C motif chemokine 3 (CCL3), found in Macaca mulatta (Rhesus macaque).